The primary structure comprises 442 residues: Tryptophan synthase beta chain 2 (442 aa).

An N6-(pyridoxal phosphate)lysine modification is found at K110.

It belongs to the TrpB family. In terms of assembly, tetramer of two alpha and two beta chains. Pyridoxal 5'-phosphate serves as cofactor.

It carries out the reaction (1S,2R)-1-C-(indol-3-yl)glycerol 3-phosphate + L-serine = D-glyceraldehyde 3-phosphate + L-tryptophan + H2O. Its pathway is amino-acid biosynthesis; L-tryptophan biosynthesis; L-tryptophan from chorismate: step 5/5. In terms of biological role, the beta subunit is responsible for the synthesis of L-tryptophan from indole and L-serine. This is Tryptophan synthase beta chain 2 from Thermococcus kodakarensis (strain ATCC BAA-918 / JCM 12380 / KOD1) (Pyrococcus kodakaraensis (strain KOD1)).